A 170-amino-acid polypeptide reads, in one-letter code: NADH-quinone oxidoreductase subunit B (170 aa).

[4Fe-4S] cluster is bound by residues C37, C38, C102, and C131.

The protein belongs to the complex I 20 kDa subunit family. As to quaternary structure, NDH-1 is composed of 14 different subunits. Subunits NuoB, C, D, E, F, and G constitute the peripheral sector of the complex. It depends on [4Fe-4S] cluster as a cofactor.

It localises to the cell inner membrane. It catalyses the reaction a quinone + NADH + 5 H(+)(in) = a quinol + NAD(+) + 4 H(+)(out). Functionally, NDH-1 shuttles electrons from NADH, via FMN and iron-sulfur (Fe-S) centers, to quinones in the respiratory chain. The immediate electron acceptor for the enzyme in this species is believed to be ubiquinone. Couples the redox reaction to proton translocation (for every two electrons transferred, four hydrogen ions are translocated across the cytoplasmic membrane), and thus conserves the redox energy in a proton gradient. This Geobacter sp. (strain M21) protein is NADH-quinone oxidoreductase subunit B.